Reading from the N-terminus, the 116-residue chain is NADPH-dependent 7-cyano-7-deazaguanine reductase (116 aa).

Cysteine 31 acts as the Thioimide intermediate in catalysis. Aspartate 38 (proton donor) is an active-site residue. Substrate is bound by residues isoleucine 53 to leucine 55 and tyrosine 72 to glutamate 73.

This sequence belongs to the GTP cyclohydrolase I family. QueF type 1 subfamily.

It is found in the cytoplasm. It catalyses the reaction 7-aminomethyl-7-carbaguanine + 2 NADP(+) = 7-cyano-7-deazaguanine + 2 NADPH + 3 H(+). The protein operates within tRNA modification; tRNA-queuosine biosynthesis. Its function is as follows. Catalyzes the NADPH-dependent reduction of 7-cyano-7-deazaguanine (preQ0) to 7-aminomethyl-7-deazaguanine (preQ1). This is NADPH-dependent 7-cyano-7-deazaguanine reductase from Chlorobaculum parvum (strain DSM 263 / NCIMB 8327) (Chlorobium vibrioforme subsp. thiosulfatophilum).